Reading from the N-terminus, the 215-residue chain is MSHSDLPLANAVPLDKIRYNDQGLVPAIAQDYLDGTVLMLAWMNEAALAKTLATGQVWYWSRSRQELWHKGATSGHFQKLLGIRYDCDSDALLLTIEQKGDIACHTGERSCFHQLDGHKSPPPADMLTELARVIGDRRDHPTPESYTCKLLAGGDNKILKKIGEESAEVVMACKDDDPEAIAGEVADLFYHTLVALAHHNVDLRAVYRKLGDRRR.

A phosphoribosyl-AMP cyclohydrolase region spans residues 1–126 (MSHSDLPLAN…GHKSPPPADM (126 aa)). A phosphoribosyl-ATP pyrophosphohydrolase region spans residues 127–215 (LTELARVIGD…VYRKLGDRRR (89 aa)).

The protein in the N-terminal section; belongs to the PRA-CH family. This sequence in the C-terminal section; belongs to the PRA-PH family.

The protein resides in the cytoplasm. It catalyses the reaction 1-(5-phospho-beta-D-ribosyl)-ATP + H2O = 1-(5-phospho-beta-D-ribosyl)-5'-AMP + diphosphate + H(+). The enzyme catalyses 1-(5-phospho-beta-D-ribosyl)-5'-AMP + H2O = 1-(5-phospho-beta-D-ribosyl)-5-[(5-phospho-beta-D-ribosylamino)methylideneamino]imidazole-4-carboxamide. Its pathway is amino-acid biosynthesis; L-histidine biosynthesis; L-histidine from 5-phospho-alpha-D-ribose 1-diphosphate: step 2/9. It functions in the pathway amino-acid biosynthesis; L-histidine biosynthesis; L-histidine from 5-phospho-alpha-D-ribose 1-diphosphate: step 3/9. This Synechocystis sp. (strain ATCC 27184 / PCC 6803 / Kazusa) protein is Histidine biosynthesis bifunctional protein HisIE (hisI).